The following is a 620-amino-acid chain: Chaperone protein HscA homolog (620 aa).

This sequence belongs to the heat shock protein 70 family.

Its function is as follows. Chaperone involved in the maturation of iron-sulfur cluster-containing proteins. Has a low intrinsic ATPase activity which is markedly stimulated by HscB. The chain is Chaperone protein HscA homolog from Pseudomonas entomophila (strain L48).